The sequence spans 248 residues: Ubiquinone/menaquinone biosynthesis C-methyltransferase UbiE (248 aa).

Residues S68 and D92 each contribute to the S-adenosyl-L-methionine site.

Belongs to the class I-like SAM-binding methyltransferase superfamily. MenG/UbiE family.

The enzyme catalyses a 2-demethylmenaquinol + S-adenosyl-L-methionine = a menaquinol + S-adenosyl-L-homocysteine + H(+). It carries out the reaction a 2-methoxy-6-(all-trans-polyprenyl)benzene-1,4-diol + S-adenosyl-L-methionine = a 5-methoxy-2-methyl-3-(all-trans-polyprenyl)benzene-1,4-diol + S-adenosyl-L-homocysteine + H(+). It functions in the pathway quinol/quinone metabolism; menaquinone biosynthesis; menaquinol from 1,4-dihydroxy-2-naphthoate: step 2/2. The protein operates within cofactor biosynthesis; ubiquinone biosynthesis. In terms of biological role, methyltransferase required for the conversion of demethylmenaquinol (DMKH2) to menaquinol (MKH2) and the conversion of 2-polyprenyl-6-methoxy-1,4-benzoquinol (DDMQH2) to 2-polyprenyl-3-methyl-6-methoxy-1,4-benzoquinol (DMQH2). The sequence is that of Ubiquinone/menaquinone biosynthesis C-methyltransferase UbiE from Rickettsia felis (strain ATCC VR-1525 / URRWXCal2) (Rickettsia azadi).